A 534-amino-acid polypeptide reads, in one-letter code: Cyclin-L1 (534 aa).

2 cyclin-like regions span residues 94-196 (ELIQ…RVLK) and 209-293 (KIIV…KILQ). A disordered region spans residues 327–534 (LPEGAPVLDN…DHPGHSRHRR (208 aa)). Over residues 389–399 (KGRESRSRSGS) the composition is skewed to basic and acidic residues. Low complexity-rich tracts occupy residues 400–412 (RDQS…SRSA) and 437–453 (RSGS…TYKS). The interval 400–436 (RDQSYSRSPSRSASPKHRKSESYSTSSGSKSHSRSRS) is RS. Residues 468 to 485 (SAHKARKSRSRSSSRSRS) are compositionally biased toward basic residues. Basic and acidic residues predominate over residues 486–495 (RSRERSDHSG). The span at 496 to 511 (KYKKKSHYYRNHRHER) shows a compositional bias: basic residues. The span at 512-528 (SRSYERASHRYDRDHPG) shows a compositional bias: basic and acidic residues.

Belongs to the cyclin family. Cyclin L subfamily.

It is found in the nucleus speckle. It localises to the nucleus. The protein resides in the nucleoplasm. Its function is as follows. Involved in pre-mRNA splicing. This is Cyclin-L1 (CCNL1) from Gallus gallus (Chicken).